A 120-amino-acid polypeptide reads, in one-letter code: Large ribosomal subunit protein bL20 (120 aa).

The protein belongs to the bacterial ribosomal protein bL20 family.

Binds directly to 23S ribosomal RNA and is necessary for the in vitro assembly process of the 50S ribosomal subunit. It is not involved in the protein synthesizing functions of that subunit. The sequence is that of Large ribosomal subunit protein bL20 from Paracidovorax citrulli (strain AAC00-1) (Acidovorax citrulli).